The sequence spans 67 residues: Large ribosomal subunit protein eL24 (67 aa).

Cys7, Cys10, Cys33, and Cys37 together coordinate Zn(2+). The C4-type zinc-finger motif lies at 7-37 (CDYCGTDIEPGTGTMFVHKDGATTHFCSSKC). The span at 48 to 60 (RNLEWTDTARGEA) shows a compositional bias: basic and acidic residues. The disordered stretch occupies residues 48–67 (RNLEWTDTARGEAGEAEDEA).

This sequence belongs to the eukaryotic ribosomal protein eL24 family. In terms of assembly, part of the 50S ribosomal subunit. Forms a cluster with proteins L3 and L14. Zn(2+) serves as cofactor.

In terms of biological role, binds to the 23S rRNA. This is Large ribosomal subunit protein eL24 (rpl24e) from Haloarcula marismortui (strain ATCC 43049 / DSM 3752 / JCM 8966 / VKM B-1809) (Halobacterium marismortui).